A 402-amino-acid chain; its full sequence is Multidrug resistance protein MdtH (402 aa).

Over 1–12 (MSRVSQARNLGK) the chain is Cytoplasmic. The helical transmembrane segment at 13–33 (YFLLIDNMLVVLGFFVVFPLI) threads the bilayer. The Periplasmic segment spans residues 34–98 (SIRFVDQMGW…GFATMGIAHE (65 aa)). Residues 99-116 (PWLLWFSCFLSGLGGTLF) traverse the membrane as a helical segment. Residues 117–138 (DPPRSALVVKLIRPEQRDRFFS) lie on the Cytoplasmic side of the membrane. A helical transmembrane segment spans residues 139–159 (LLMMQDSAGAVIGALLGSWLL). Over 160–164 (QYDFR) the chain is Periplasmic. Residues 165 to 185 (LVCATGAILFILCALFNAWLL) form a helical membrane-spanning segment. The Cytoplasmic portion of the chain corresponds to 186–213 (PAWKLSTVRTPVREGMRRVMSDKRFVTY). A helical membrane pass occupies residues 214–234 (VLTLAGYYMLAVQVMLMLPIM). Residues 235 to 243 (VNDIAGSPA) lie on the Periplasmic side of the membrane. Residues 244–264 (AVKWMYAIEACLSLTLLYPIA) form a helical membrane-spanning segment. Residues 265–276 (RWSEKRFRLEHR) are Cytoplasmic-facing. The helical transmembrane segment at 277 to 297 (LMAGLLVMSLSMLPIGMVGNL) threads the bilayer. Topologically, residues 298 to 299 (QQ) are periplasmic. A helical transmembrane segment spans residues 300 to 320 (LFTLICAFYIGSVIAEPARET). Topologically, residues 321 to 339 (LSASLADARARGSYMGFSR) are cytoplasmic. A helical transmembrane segment spans residues 340–360 (LGLAIGGAIGYIGGGWLFDMG). Residues 361–367 (KALAQPE) are Periplasmic-facing. A helical transmembrane segment spans residues 368–388 (LPWMMLGIIGFITFLALGWQF). Residues 389–402 (SHKRTPRRMLEPGA) lie on the Cytoplasmic side of the membrane.

It belongs to the major facilitator superfamily. DHA1 family. MdtH (TC 2.A.1.2.21) subfamily.

The protein localises to the cell inner membrane. The sequence is that of Multidrug resistance protein MdtH from Salmonella typhimurium (strain LT2 / SGSC1412 / ATCC 700720).